The sequence spans 1132 residues: SNF2 domain-containing protein CLASSY 4 (1132 aa).

4 disordered regions span residues 24–104 (NKSK…SKSF), 224–331 (LRGE…HHKK), 376–396 (DPVVRESSSEKVNEHGKPRER), and 525–544 (PSVNDNKKCSDRKGDPLPNR). Positions 47 to 54 (KRRVNMRD) match the Nuclear localization signal motif. A compositionally biased stretch (basic and acidic residues) spans 81–90 (EYPEGKRDDE). Over residues 92 to 103 (VGSTSGNLQSKS) the composition is skewed to polar residues. Residues 233-242 (SDEVVSLSSS) are compositionally biased toward low complexity. A compositionally biased stretch (acidic residues) spans 243–254 (SDDEEDPLEELG). The span at 255–269 (TDSREEVSGEDRDSG) shows a compositional bias: basic and acidic residues. Composition is skewed to acidic residues over residues 270 to 282 (ESDMDEDANDSDS) and 291 to 309 (DSSDVESSDSDFVCSEDEE). 3 stretches are compositionally biased toward basic and acidic residues: residues 310–326 (GGTRDDATCEKNPSEKV), 376–392 (DPVVRESSSEKVNEHGK), and 525–539 (PSVNDNKKCSDRKGD). The 194-residue stretch at 603–796 (SVGVKGSGGC…SNVLCLARPA (194 aa)) folds into the Helicase ATP-binding domain. 616–623 (HKAGTGKT) is a binding site for ATP. The DEAH box signature appears at 747–750 (DEGH). Residues 934 to 1087 (DFIRISGTVK…ELVFSSTNEK (154 aa)) form the Helicase C-terminal domain.

It belongs to the SNF2/RAD54 helicase family. In terms of assembly, interacts with NRPD1.

Its subcellular location is the nucleus. Probable chromatin remodeling factor. The sequence is that of SNF2 domain-containing protein CLASSY 4 (CLSY4) from Arabidopsis thaliana (Mouse-ear cress).